The sequence spans 96 residues: Small cysteine and glycine repeat-containing protein 7 (96 aa).

The tract at residues 4–80 (CGCGSCGGCG…TCGSCGCGCG (77 aa)) is 14 X 2 AA repeats of CG.

It belongs to the KRTAP type 28 family.

Its function is as follows. In the hair cortex, hair keratin intermediate filaments are embedded in an interfilamentous matrix, consisting of hair keratin-associated proteins (KRTAP), which are essential for the formation of a rigid and resistant hair shaft through their extensive disulfide bond cross-linking with abundant cysteine residues of hair keratins. The matrix proteins include the high-sulfur and high-glycine-tyrosine keratins. The sequence is that of Small cysteine and glycine repeat-containing protein 7 from Homo sapiens (Human).